Reading from the N-terminus, the 226-residue chain is Oxaloacetate tautomerase FAHD2, mitochondrial (226 aa).

A mitochondrion-targeting transit peptide spans 1 to 30 (MAAAAQRLLAASTKIVGVGRNFVAHAKELG). Residues glutamate 69, glutamate 71, and aspartate 100 each coordinate Mg(2+).

This sequence belongs to the FAH family. Mg(2+) serves as cofactor. Mn(2+) is required as a cofactor.

It is found in the mitochondrion. It carries out the reaction oxaloacetate = enol-oxaloacetate. Tautomerase that converts enol-oxaloacetate, a strong inhibitor of succinate dehydrogenase, to the physiological keto form of oxaloacetate. This Oryza sativa subsp. japonica (Rice) protein is Oxaloacetate tautomerase FAHD2, mitochondrial.